The sequence spans 331 residues: 2-oxoglutarate-dependent dioxygenase (331 aa).

Positions 186–292 (PACPLRLLHY…RYSVVFFMDG (107 aa)) constitute a Fe2OG dioxygenase domain. Fe cation-binding residues include H214, D216, and H272. R283 contributes to the 2-oxoglutarate binding site.

Belongs to the iron/ascorbate-dependent oxidoreductase family. Requires Fe(2+) as cofactor.

The protein operates within mycotoxin biosynthesis. In terms of biological role, 2-oxoglutarate-dependent dioxygenase; part of the gene cluster that mediates the biosynthesis of the selective antifungal agent ascochitine, an o-quinone methide that plays a possible protective role against other microbial competitors in nature and is considered to be important for pathogenicity of legume-associated Didymella species. The pathway probably begins with the synthesis of a keto-aldehyde intermediate by the ascochitine non-reducing polyketide synthase pksAC from successive condensations of 4 malonyl-CoA units, presumably with a simple acetyl-CoA starter unit. Release of the keto-aldehyde intermediate is consistent with the presence of the C-terminal reductive release domain. The HR-PKS (orf7) probably makes a diketide starter unit which is passed to the non-reducing polyketide synthase pksAC for further extension, producing ascochital and ascochitine. The aldehyde dehydrogenase (orf1), the 2-oxoglutarate-dependent dioxygenase (orf3) and the dehydrogenase (orf9) are probably involved in subsequent oxidations of methyl groups to the carboxylic acid of the heterocyclic ring. The ascochitine gene cluster also includes a gene encoding a short peptide with a cupin domain (orf2) that is often found in secondary metabolite gene clusters and which function has still to be determined. This Didymella fabae (Leaf and pod spot disease fungus) protein is 2-oxoglutarate-dependent dioxygenase.